The primary structure comprises 381 residues: Putative glutamate--cysteine ligase 2 (381 aa).

This sequence belongs to the glutamate--cysteine ligase type 2 family. YbdK subfamily.

The catalysed reaction is L-cysteine + L-glutamate + ATP = gamma-L-glutamyl-L-cysteine + ADP + phosphate + H(+). Functionally, ATP-dependent carboxylate-amine ligase which exhibits weak glutamate--cysteine ligase activity. This chain is Putative glutamate--cysteine ligase 2, found in Polaromonas naphthalenivorans (strain CJ2).